The following is a 399-amino-acid chain: Maltose excess protein 1-like, chloroplastic (399 aa).

A chloroplast-targeting transit peptide spans 1–67; that stretch reads MSSSVSSVRL…RRRRYALPPV (67 aa). Transmembrane regions (helical) follow at residues 93–113, 123–143, 154–174, 180–202, 217–237, 238–258, 268–288, 306–326, and 361–381; these read FAGA…ILNA, ALFA…LSLL, AVIV…QLAM, LPQF…LNYF, ITIG…VPFI, PNSL…VVMA, INFV…WMPV, AFTM…AVFI, and FLAT…RDTI.

It localises to the plastid. Its subcellular location is the chloroplast inner membrane. In terms of biological role, probable maltose transporter. Essential for the conversion of starch to sucrose in leaves at night, probably via the export of maltose from the chloroplast. In Oryza sativa subsp. japonica (Rice), this protein is Maltose excess protein 1-like, chloroplastic.